The sequence spans 276 residues: Thiazole synthase (276 aa).

Catalysis depends on Lys112, which acts as the Schiff-base intermediate with DXP. 1-deoxy-D-xylulose 5-phosphate-binding positions include Gly173, 199–200, and 221–222; these read AG and NT.

It belongs to the ThiG family. In terms of assembly, homotetramer. Forms heterodimers with either ThiH or ThiS.

The protein resides in the cytoplasm. The enzyme catalyses [ThiS sulfur-carrier protein]-C-terminal-Gly-aminoethanethioate + 2-iminoacetate + 1-deoxy-D-xylulose 5-phosphate = [ThiS sulfur-carrier protein]-C-terminal Gly-Gly + 2-[(2R,5Z)-2-carboxy-4-methylthiazol-5(2H)-ylidene]ethyl phosphate + 2 H2O + H(+). It participates in cofactor biosynthesis; thiamine diphosphate biosynthesis. Catalyzes the rearrangement of 1-deoxy-D-xylulose 5-phosphate (DXP) to produce the thiazole phosphate moiety of thiamine. Sulfur is provided by the thiocarboxylate moiety of the carrier protein ThiS. In vitro, sulfur can be provided by H(2)S. In Synechococcus sp. (strain ATCC 27144 / PCC 6301 / SAUG 1402/1) (Anacystis nidulans), this protein is Thiazole synthase.